A 478-amino-acid polypeptide reads, in one-letter code: Zinc finger C3HC-type protein 1-like (478 aa).

The C3HC-type zinc-finger motif lies at 93–147 (CAKYGWSNIECDMLKCSSCNAYLCASLQPVLDFSKYKQRCVELQEALRKAHEKFC). A disordered region spans residues 285–389 (LSAPNTPVSP…SSSSDTSPRG (105 aa)). Residues 351–363 (SMGQGESSGLSNE) are compositionally biased toward polar residues. Residues 377–388 (LCSSSSSDTSPR) show a composition bias toward low complexity.

In terms of processing, phosphorylated. May also be weakly phosphorylated on Tyr residues.

The protein localises to the nucleus. It is found in the nucleus envelope. In terms of biological role, required for proper positioning of a substantial amount of TPR at the nuclear basket (NB) through interaction with TPR. The protein is Zinc finger C3HC-type protein 1-like (zc3hc1) of Xenopus tropicalis (Western clawed frog).